Consider the following 404-residue polypeptide: MQYSEIMVRHGELSTKGKNRMRFINKLKRNIQEVLSPFPNIKVRSDRDRTHVFLNGTPYEPVAEALKNVFGIQAFNPVYKLEKNVDLLIASVQEIMKDLYVDGMTFKISSKRSDHHFELDSRDLNLVLGNAVFDVLPNIKAQMKKPDVNLKVEIRDEAAYISHEEIKGAGGLPVGTSGKGMLMLSGGIDSPVAGYLALKRGVEIEAVHFASPPYTSPGALKKAQDLTRKLTKFGGNIQFIEVPFTEIQEEIKDKAPEAYLMTLTRRFMMRITDAIRASRSGLVIVNGESLGQVASQTLESMQAINAVTATPVIRPVVTMDKLEIIELAEKIDTFSISIQPFEDCCTIFAPDRPKTNPKLKNVEEYEKRFDIDGLVQRAVKGIKITEIKPEAEADDVDLMLDALL.

The THUMP domain occupies 60–165 (EPVAEALKNV…DEAAYISHEE (106 aa)). ATP is bound by residues 183 to 184 (ML), 208 to 209 (HF), R265, G287, and Q296.

Belongs to the ThiI family.

It is found in the cytoplasm. It carries out the reaction [ThiI sulfur-carrier protein]-S-sulfanyl-L-cysteine + a uridine in tRNA + 2 reduced [2Fe-2S]-[ferredoxin] + ATP + H(+) = [ThiI sulfur-carrier protein]-L-cysteine + a 4-thiouridine in tRNA + 2 oxidized [2Fe-2S]-[ferredoxin] + AMP + diphosphate. The enzyme catalyses [ThiS sulfur-carrier protein]-C-terminal Gly-Gly-AMP + S-sulfanyl-L-cysteinyl-[cysteine desulfurase] + AH2 = [ThiS sulfur-carrier protein]-C-terminal-Gly-aminoethanethioate + L-cysteinyl-[cysteine desulfurase] + A + AMP + 2 H(+). Its pathway is cofactor biosynthesis; thiamine diphosphate biosynthesis. Catalyzes the ATP-dependent transfer of a sulfur to tRNA to produce 4-thiouridine in position 8 of tRNAs, which functions as a near-UV photosensor. Also catalyzes the transfer of sulfur to the sulfur carrier protein ThiS, forming ThiS-thiocarboxylate. This is a step in the synthesis of thiazole, in the thiamine biosynthesis pathway. The sulfur is donated as persulfide by IscS. This Streptococcus uberis (strain ATCC BAA-854 / 0140J) protein is Probable tRNA sulfurtransferase.